Here is a 438-residue protein sequence, read N- to C-terminus: Gamma-glutamyl phosphate reductase (438 aa).

Belongs to the gamma-glutamyl phosphate reductase family.

It is found in the cytoplasm. It catalyses the reaction L-glutamate 5-semialdehyde + phosphate + NADP(+) = L-glutamyl 5-phosphate + NADPH + H(+). The protein operates within amino-acid biosynthesis; L-proline biosynthesis; L-glutamate 5-semialdehyde from L-glutamate: step 2/2. In terms of biological role, catalyzes the NADPH-dependent reduction of L-glutamate 5-phosphate into L-glutamate 5-semialdehyde and phosphate. The product spontaneously undergoes cyclization to form 1-pyrroline-5-carboxylate. The sequence is that of Gamma-glutamyl phosphate reductase from Natronomonas pharaonis (strain ATCC 35678 / DSM 2160 / CIP 103997 / JCM 8858 / NBRC 14720 / NCIMB 2260 / Gabara) (Halobacterium pharaonis).